A 311-amino-acid chain; its full sequence is p-hydroxybenzoic acid efflux pump subunit AaeA (311 aa).

Residues 11–31 (VGITVLVVVLAVIAIFNVWAF) form a helical membrane-spanning segment.

This sequence belongs to the membrane fusion protein (MFP) (TC 8.A.1) family.

It is found in the cell inner membrane. Forms an efflux pump with AaeB. This is p-hydroxybenzoic acid efflux pump subunit AaeA from Yersinia pseudotuberculosis serotype O:1b (strain IP 31758).